Here is a 1454-residue protein sequence, read N- to C-terminus: Alpha-2-macroglobulin-like protein 1 (1454 aa).

The first 17 residues, M1–A17, serve as a signal peptide directing secretion. C40 and C78 are disulfide-bonded. A glycan (N-linked (GlcNAc...) asparagine) is linked at N120. 2 disulfide bridges follow: C241/C291 and C259/C279. N281 and N409 each carry an N-linked (GlcNAc...) asparagine glycan. Intrachain disulfides connect C464/C557, C589/C769, C819/C847, C845/C881, C919/C1307, C1075/C1123, and C1338/C1453. Positions S695–D726 are bait region. Residue N857 is glycosylated (N-linked (GlcNAc...) asparagine). A cross-link (isoglutamyl cysteine thioester (Cys-Gln)) is located at residues C970 to Q973. N-linked (GlcNAc...) asparagine glycosylation is present at N1020.

It belongs to the protease inhibitor I39 (alpha-2-macroglobulin) family. In terms of assembly, monomer. As to expression, in the epidermis, expressed predominantly in the granular layer at the apical edge of keratinocytes (at protein level). Also detected in placenta, testis and thymus but not in epithelia of kidney, lung, small intestine or colon.

The protein resides in the secreted. Is able to inhibit all four classes of proteinases by a unique 'trapping' mechanism. This protein has a peptide stretch, called the 'bait region' which contains specific cleavage sites for different proteinases. When a proteinase cleaves the bait region, a conformational change is induced in the protein which traps the proteinase. The entrapped enzyme remains active against low molecular weight substrates (activity against high molecular weight substrates is greatly reduced). Following cleavage in the bait region a thioester bond is hydrolyzed and mediates the covalent binding of the protein to the proteinase. Displays inhibitory activity against chymotrypsin, papain, thermolysin, subtilisin A and, to a lesser extent, elastase but not trypsin. May play an important role during desquamation by inhibiting extracellular proteases. This chain is Alpha-2-macroglobulin-like protein 1, found in Homo sapiens (Human).